The chain runs to 228 residues: MKCKILVADLDGTLTLSRNTYELSVEALLALRKARDSGLRVVLATANGLDFALTIARYLGVRDVIAENGCLIHLDGVTYELCSGDMSIVDKVIISTGAVIPSPQNRCRKYDMAYIPLVKDTLEKVRAVVGTGYIVESSGYAIHVRPAGVDKGVAVSWLCRKLDVSCHQVATVGDSDVDVGMLSIAWGIAVGNATEAAKKAARVVVEEPSGLGFKEAVNLILSGDACTP.

Catalysis depends on D9, which acts as the Nucleophile. Residues D9 and D11 each coordinate Mg(2+). A substrate-binding site is contributed by K151. Residues D174 and D178 each coordinate Mg(2+).

Belongs to the archaeal SPP-like hydrolase family. It depends on Mg(2+) as a cofactor.

The catalysed reaction is 2-phosphoglycolate + H2O = glycolate + phosphate. In terms of biological role, catalyzes the dephosphorylation of 2-phosphoglycolate. This Pyrobaculum islandicum (strain DSM 4184 / JCM 9189 / GEO3) protein is Phosphoglycolate phosphatase.